We begin with the raw amino-acid sequence, 287 residues long: Cell division protein ZipA (287 aa).

A topological domain (periplasmic) is located at residue Met-1. A helical membrane pass occupies residues Glu-2–Phe-22. Over Asp-23–Arg-287 the chain is Cytoplasmic. The segment at Leu-70 to Pro-143 is disordered.

This sequence belongs to the ZipA family. In terms of assembly, interacts with FtsZ via their C-terminal domains.

Its subcellular location is the cell inner membrane. In terms of biological role, essential cell division protein that stabilizes the FtsZ protofilaments by cross-linking them and that serves as a cytoplasmic membrane anchor for the Z ring. Also required for the recruitment to the septal ring of downstream cell division proteins. This Pseudomonas fluorescens (strain SBW25) protein is Cell division protein ZipA.